The sequence spans 238 residues: Large ribosomal subunit protein uL2 (238 aa).

The tract at residues 198–238 (NHPHGGGSHQSPSFPTTVSRNAPPGRKVGHIAARSTGRRKR) is disordered. Positions 206–217 (HQSPSFPTTVSR) are enriched in polar residues.

The protein belongs to the universal ribosomal protein uL2 family. As to quaternary structure, part of the 50S ribosomal subunit. Forms a bridge to the 30S subunit in the 70S ribosome.

Functionally, one of the primary rRNA binding proteins. Required for association of the 30S and 50S subunits to form the 70S ribosome, for tRNA binding and peptide bond formation. It has been suggested to have peptidyltransferase activity; this is somewhat controversial. Makes several contacts with the 16S rRNA in the 70S ribosome. In Hyperthermus butylicus (strain DSM 5456 / JCM 9403 / PLM1-5), this protein is Large ribosomal subunit protein uL2.